A 1706-amino-acid polypeptide reads, in one-letter code: Cadherin-99C (1706 aa).

The first 28 residues, 1 to 28, serve as a signal peptide directing secretion; sequence MAARNSLTPQQGLGFFGLLILLCSAVLG. The Extracellular portion of the chain corresponds to 29-1395; it reads KSQMCEVETG…AIDNEVFPFT (1367 aa). Cadherin domains follow at residues 68 to 142, 143 to 264, 277 to 387, 388 to 500, 519 to 604, 605 to 704, 707 to 807, 808 to 908, 909 to 1005, 1038 to 1148, and 1156 to 1270; these read DPDT…APRF, MNTP…DPSF, INPE…PPVI, SSSQ…APKL, VTQV…PPRF, QKPI…NPEF, STLP…VPKF, SDAR…PPRF, ITVP…RVDV, SDDS…APEF, and QQDT…ALSF. N-linked (GlcNAc...) asparagine glycosylation is found at Asn-105 and Asn-188. N-linked (GlcNAc...) asparagine glycosylation is found at Asn-442, Asn-553, Asn-620, and Asn-753. Residues Asn-1053, Asn-1088, and Asn-1108 are each glycosylated (N-linked (GlcNAc...) asparagine). Residues Asn-1311 and Asn-1367 are each glycosylated (N-linked (GlcNAc...) asparagine). A helical transmembrane segment spans residues 1396–1416; the sequence is LIAISLVILILGTIGIIYICI. At 1417–1706 the chain is on the cytoplasmic side; that stretch reads SWSKYKNFKQ…RSEVETTTEL (290 aa).

Interacts (via the cytoplasmic domain) with ck. Interacts (via the cytoplasmic domain) with Cul1 and Ubr3.

It is found in the apical cell membrane. Its subcellular location is the endosome membrane. The protein localises to the cell projection. The protein resides in the microvillus membrane. In terms of biological role, cadherin that functions in epithelial morphogenesis and the intestine epithelial immune response. Essential for female fertility. Regulates the length and organization of apical microvilli in developing follicle cells and salivary glands. Function in the follicle cell is essential for egg development as the microvilli secrete eggshell material such as the vitelline membrane. Acts at least in part by regulating the recruitment of the myosin ck to the follicle cell microvilli. Also required to regulate cell rearrangements during salivary tube elongation, possibly by modulating cellular adhesion between the apical surface and apical extracellular matrix during epithelial tube elongation. May also function in cellular adhesion during the development of other tubular epithelia such as the trachea. Possibly functions as an apical membrane determinant which acts in apical membrane expansion during salivary and tracheal epithelial tube elongation. In salivary gland development, this function is independent of the other apical membrane determinants crb and sas. Essential downstream component of a hh-signaling pathway which regulates the Duox-dependent gut epithelial immune response to bacterial uracil; required for endosome formation in the enterocyte and activating norpA-dependent Ca2+ mobilization, which are essential steps in the Duox-dependent production of reactive oxygen species (ROS) in response to intestinal bacterial infection. The protein is Cadherin-99C of Drosophila melanogaster (Fruit fly).